The sequence spans 478 residues: Aspartyl/glutamyl-tRNA(Asn/Gln) amidotransferase subunit B (478 aa).

This sequence belongs to the GatB/GatE family. GatB subfamily. Heterotrimer of A, B and C subunits.

The enzyme catalyses L-glutamyl-tRNA(Gln) + L-glutamine + ATP + H2O = L-glutaminyl-tRNA(Gln) + L-glutamate + ADP + phosphate + H(+). The catalysed reaction is L-aspartyl-tRNA(Asn) + L-glutamine + ATP + H2O = L-asparaginyl-tRNA(Asn) + L-glutamate + ADP + phosphate + 2 H(+). Its function is as follows. Allows the formation of correctly charged Asn-tRNA(Asn) or Gln-tRNA(Gln) through the transamidation of misacylated Asp-tRNA(Asn) or Glu-tRNA(Gln) in organisms which lack either or both of asparaginyl-tRNA or glutaminyl-tRNA synthetases. The reaction takes place in the presence of glutamine and ATP through an activated phospho-Asp-tRNA(Asn) or phospho-Glu-tRNA(Gln). The chain is Aspartyl/glutamyl-tRNA(Asn/Gln) amidotransferase subunit B from Alkalilimnicola ehrlichii (strain ATCC BAA-1101 / DSM 17681 / MLHE-1).